A 380-amino-acid polypeptide reads, in one-letter code: Chorismate synthase (380 aa).

Arg-48 is a binding site for NADP(+). FMN contacts are provided by residues 126–128, Gly-300, 315–319, and Arg-342; these read HFS and KPISS.

Belongs to the chorismate synthase family. In terms of assembly, homotetramer. FMNH2 serves as cofactor.

It catalyses the reaction 5-O-(1-carboxyvinyl)-3-phosphoshikimate = chorismate + phosphate. It participates in metabolic intermediate biosynthesis; chorismate biosynthesis; chorismate from D-erythrose 4-phosphate and phosphoenolpyruvate: step 7/7. Catalyzes the anti-1,4-elimination of the C-3 phosphate and the C-6 proR hydrogen from 5-enolpyruvylshikimate-3-phosphate (EPSP) to yield chorismate, which is the branch point compound that serves as the starting substrate for the three terminal pathways of aromatic amino acid biosynthesis. This reaction introduces a second double bond into the aromatic ring system. The protein is Chorismate synthase of Lancefieldella parvula (strain ATCC 33793 / DSM 20469 / CCUG 32760 / JCM 10300 / KCTC 3663 / VPI 0546 / 1246) (Atopobium parvulum).